The chain runs to 520 residues: Transactivator/viroplasmin protein (520 aa).

The interval 487–520 (KDASADSGPKDGPPPTRSIVEKEDVPTTSSKQVD) is disordered.

The protein belongs to the caulimoviridae viroplasmin family.

It localises to the host cytoplasm. Enhances the ribosomal termination-reinitiation event leading to the translation of major open reading frames on the polycistronic viral RNAs. The polypeptide is Transactivator/viroplasmin protein (Arabidopsis thaliana (Mouse-ear cress)).